Here is a 239-residue protein sequence, read N- to C-terminus: Adenylate dimethylallyltransferase (239 aa).

It belongs to the isopentenyl transferase family.

It carries out the reaction dimethylallyl diphosphate + AMP = N(6)-(dimethylallyl)adenosine 5'-phosphate + diphosphate. Transfers dimethylallyl groups to AMP as part of the biosynthesis of cytokinin phytohormones. The polypeptide is Adenylate dimethylallyltransferase (ipt) (Rhizobium radiobacter (Agrobacterium tumefaciens)).